We begin with the raw amino-acid sequence, 292 residues long: 33 kDa chaperonin (292 aa).

Intrachain disulfides connect Cys229-Cys231 and Cys262-Cys265.

This sequence belongs to the HSP33 family. Post-translationally, under oxidizing conditions two disulfide bonds are formed involving the reactive cysteines. Under reducing conditions zinc is bound to the reactive cysteines and the protein is inactive.

It localises to the cytoplasm. Its function is as follows. Redox regulated molecular chaperone. Protects both thermally unfolding and oxidatively damaged proteins from irreversible aggregation. Plays an important role in the bacterial defense system toward oxidative stress. This is 33 kDa chaperonin from Photobacterium profundum (strain SS9).